A 129-amino-acid polypeptide reads, in one-letter code: Small ribosomal subunit protein uS9 (129 aa).

The interval 108–129 is disordered; the sequence is RMVERKKYGKKKARKSFQFSKR. The segment covering 114-129 has biased composition (basic residues); that stretch reads KYGKKKARKSFQFSKR.

It belongs to the universal ribosomal protein uS9 family.

The chain is Small ribosomal subunit protein uS9 from Chlorobaculum tepidum (strain ATCC 49652 / DSM 12025 / NBRC 103806 / TLS) (Chlorobium tepidum).